Here is a 248-residue protein sequence, read N- to C-terminus: UPF0246 protein A1G_03985 (248 aa).

Belongs to the UPF0246 family.

This is UPF0246 protein A1G_03985 from Rickettsia rickettsii (strain Sheila Smith).